A 618-amino-acid chain; its full sequence is Arginine--tRNA ligase (618 aa).

A 'HIGH' region motif is present at residues 113-123 (ANPIHPLHIGH).

Belongs to the class-I aminoacyl-tRNA synthetase family.

It localises to the cytoplasm. The enzyme catalyses tRNA(Arg) + L-arginine + ATP = L-arginyl-tRNA(Arg) + AMP + diphosphate. The protein is Arginine--tRNA ligase of Sulfolobus acidocaldarius (strain ATCC 33909 / DSM 639 / JCM 8929 / NBRC 15157 / NCIMB 11770).